Reading from the N-terminus, the 397-residue chain is Elongation factor Tu (397 aa).

A tr-type G domain is found at 10–207 (KPHVNIGTLG…AVDNNIPDPV (198 aa)). The segment at 19–26 (GHVDHGKT) is G1. 19–26 (GHVDHGKT) is a GTP binding site. Thr26 is a Mg(2+) binding site. The interval 63–67 (GITIN) is G2. The segment at 84–87 (DAPG) is G3. GTP-binding positions include 84–88 (DAPGH) and 139–142 (NKSD). The tract at residues 139–142 (NKSD) is G4. Residues 177–179 (SGL) form a G5 region.

It belongs to the TRAFAC class translation factor GTPase superfamily. Classic translation factor GTPase family. EF-Tu/EF-1A subfamily. As to quaternary structure, monomer.

Its subcellular location is the cytoplasm. It catalyses the reaction GTP + H2O = GDP + phosphate + H(+). Its function is as follows. GTP hydrolase that promotes the GTP-dependent binding of aminoacyl-tRNA to the A-site of ribosomes during protein biosynthesis. The sequence is that of Elongation factor Tu from Leifsonia xyli subsp. xyli (strain CTCB07).